We begin with the raw amino-acid sequence, 488 residues long: GTPase Der (488 aa).

Residues 3–166 (PVVALVGRPN…YALAPYAEAL (164 aa)) form the EngA-type G 1 domain. GTP contacts are provided by residues 9–16 (GRPNVGKS), 56–60 (DTGGI), and 118–121 (NKVD). Positions 168–192 (LNRDGDDEEEKEEREYTEEEAEAEQ) are disordered. The segment covering 172 to 190 (GDDEEEKEEREYTEEEAEA) has biased composition (acidic residues). The EngA-type G 2 domain maps to 200–373 (IKLAVIGKPN…SVQEAYESAT (174 aa)). Residues 206–213 (GKPNVGKS), 253–257 (DTAGV), and 318–321 (NKWD) contribute to the GTP site. Positions 374 to 458 (RRVSTSMLTR…PIQVRFQDGD (85 aa)) constitute a KH-like domain.

It belongs to the TRAFAC class TrmE-Era-EngA-EngB-Septin-like GTPase superfamily. EngA (Der) GTPase family. In terms of assembly, associates with the 50S ribosomal subunit.

Functionally, GTPase that plays an essential role in the late steps of ribosome biogenesis. In Shewanella woodyi (strain ATCC 51908 / MS32), this protein is GTPase Der.